A 157-amino-acid chain; its full sequence is Small ribosomal subunit protein uS13 (157 aa).

Belongs to the universal ribosomal protein uS13 family. In terms of assembly, part of the 30S ribosomal subunit. Forms a loose heterodimer with protein S19. Forms two bridges to the 50S subunit in the 70S ribosome.

Functionally, located at the top of the head of the 30S subunit, it contacts several helices of the 16S rRNA. In the 70S ribosome it contacts the 23S rRNA (bridge B1a) and protein L5 of the 50S subunit (bridge B1b), connecting the 2 subunits; these bridges are implicated in subunit movement. This Thermofilum pendens (strain DSM 2475 / Hrk 5) protein is Small ribosomal subunit protein uS13.